The sequence spans 569 residues: Intraflagellar transport protein 74/72 (569 aa).

3 coiled-coil regions span residues 75-156, 201-231, and 271-298; these read ITAT…TRNE, YRSLNDENITLKQKESELRKELQEAAAVAAN, and AITLHRQIRAAKRELDAYKAKIKAAESH.

Belongs to the IFT74 family.

The protein localises to the cell projection. The protein resides in the cilium. It localises to the flagellum. Its subcellular location is the cytoplasm. It is found in the cytoskeleton. The protein localises to the flagellum axoneme. The protein resides in the flagellum basal body. Component of the intraflagellar transport complex B (IFT-B) involved in flagellar assembly. The protein is Intraflagellar transport protein 74/72 of Giardia intestinalis (strain ATCC 50803 / WB clone C6) (Giardia lamblia).